The primary structure comprises 71 residues: Translation initiation factor IF-1 (71 aa).

An S1-like domain is found at 1-71 (MSKDDLIQFT…LTKGRVIHRH (71 aa)).

It belongs to the IF-1 family. As to quaternary structure, component of the 30S ribosomal translation pre-initiation complex which assembles on the 30S ribosome in the order IF-2 and IF-3, IF-1 and N-formylmethionyl-tRNA(fMet); mRNA recruitment can occur at any time during PIC assembly.

Its subcellular location is the cytoplasm. One of the essential components for the initiation of protein synthesis. Stabilizes the binding of IF-2 and IF-3 on the 30S subunit to which N-formylmethionyl-tRNA(fMet) subsequently binds. Helps modulate mRNA selection, yielding the 30S pre-initiation complex (PIC). Upon addition of the 50S ribosomal subunit IF-1, IF-2 and IF-3 are released leaving the mature 70S translation initiation complex. This Rickettsia felis (strain ATCC VR-1525 / URRWXCal2) (Rickettsia azadi) protein is Translation initiation factor IF-1.